The chain runs to 119 residues: uncharacterized protein (119 aa).

The N-terminal stretch at 1 to 23 (MVKWAVSILVNALLLIVIDGYID) is a signal peptide. The next 3 membrane-spanning stretches (helical) occupy residues 27 to 47 (ISSI…NVLI), 50 to 70 (LLII…LFVI), and 88 to 108 (IDGF…HLLI).

The protein resides in the cell membrane. This is an uncharacterized protein from Bacillus subtilis (strain 168).